The primary structure comprises 137 residues: DNA-binding protein H-NS (137 aa).

A DNA-binding region spans residues 112–117; sequence QGRTPA.

Belongs to the histone-like protein H-NS family. Homodimer that oligomerizes on DNA into higher-order complexes that form bridges between disparate regions of DNA compacting it. Interacts with Hha, Cnu and StpA.

Its subcellular location is the cytoplasm. The protein resides in the nucleoid. Functionally, a DNA-binding protein implicated in transcriptional repression and chromosome organization and compaction. Binds nucleation sites in AT-rich DNA and bridges them, forming higher-order nucleoprotein complexes and condensing the chromosome. As many horizontally transferred genes are AT-rich, it plays a central role in silencing foreign genes. A subset of genes are repressed by H-NS in association with other proteins. In Escherichia coli O6:H1 (strain CFT073 / ATCC 700928 / UPEC), this protein is DNA-binding protein H-NS (hns).